We begin with the raw amino-acid sequence, 472 residues long: 3-isopropylmalate dehydratase large subunit (472 aa).

[4Fe-4S] cluster contacts are provided by C352, C413, and C416.

Belongs to the aconitase/IPM isomerase family. LeuC type 1 subfamily. Heterodimer of LeuC and LeuD. It depends on [4Fe-4S] cluster as a cofactor.

The enzyme catalyses (2R,3S)-3-isopropylmalate = (2S)-2-isopropylmalate. Its pathway is amino-acid biosynthesis; L-leucine biosynthesis; L-leucine from 3-methyl-2-oxobutanoate: step 2/4. Catalyzes the isomerization between 2-isopropylmalate and 3-isopropylmalate, via the formation of 2-isopropylmaleate. The chain is 3-isopropylmalate dehydratase large subunit from Laribacter hongkongensis (strain HLHK9).